Here is a 255-residue protein sequence, read N- to C-terminus: ATP synthase subunit a 2 (255 aa).

5 helical membrane-spanning segments follow: residues 24–44 (WFGINLDSMIMVWLTGLVFIL), 86–106 (LIGPLALTIFVWVLLMNAVDL), 131–151 (DINITMSMALGVFILVLGYTF), 205–225 (MIFILIALMPWWMQWALSVPW), and 226–246 (ALFHILIVVLQAFIFMVLTVV).

It belongs to the ATPase A chain family. As to quaternary structure, F-type ATPases have 2 components, CF(1) - the catalytic core - and CF(0) - the membrane proton channel. CF(1) has five subunits: alpha(3), beta(3), gamma(1), delta(1), epsilon(1). CF(0) has three main subunits: a(1), b(2) and c(9-12). The alpha and beta chains form an alternating ring which encloses part of the gamma chain. CF(1) is attached to CF(0) by a central stalk formed by the gamma and epsilon chains, while a peripheral stalk is formed by the delta and b chains.

The protein resides in the cell inner membrane. Its function is as follows. Key component of the proton channel; it plays a direct role in the translocation of protons across the membrane. In Vibrio campbellii (strain ATCC BAA-1116), this protein is ATP synthase subunit a 2.